Reading from the N-terminus, the 239-residue chain is Fatty acid metabolism regulator protein (239 aa).

Residues 6–74 form the HTH gntR-type domain; the sequence is QSPAGFAEEY…HGKPTKVNNF (69 aa). The H-T-H motif DNA-binding region spans 34-53; that stretch reads ERELSELIGVTRTTLREVLQ.

In terms of assembly, homodimer.

It is found in the cytoplasm. In terms of biological role, multifunctional regulator of fatty acid metabolism. This chain is Fatty acid metabolism regulator protein, found in Escherichia fergusonii (strain ATCC 35469 / DSM 13698 / CCUG 18766 / IAM 14443 / JCM 21226 / LMG 7866 / NBRC 102419 / NCTC 12128 / CDC 0568-73).